The following is a 164-amino-acid chain: FMN reductase (NADH) RutF (164 aa).

This sequence belongs to the non-flavoprotein flavin reductase family. RutF subfamily.

It carries out the reaction FMNH2 + NAD(+) = FMN + NADH + 2 H(+). In terms of biological role, catalyzes the reduction of FMN to FMNH2 which is used to reduce pyrimidine by RutA via the Rut pathway. This chain is FMN reductase (NADH) RutF, found in Klebsiella pneumoniae (strain 342).